The primary structure comprises 177 residues: Large ribosomal subunit protein uL6 (177 aa).

It belongs to the universal ribosomal protein uL6 family. In terms of assembly, part of the 50S ribosomal subunit.

This protein binds to the 23S rRNA, and is important in its secondary structure. It is located near the subunit interface in the base of the L7/L12 stalk, and near the tRNA binding site of the peptidyltransferase center. This Pseudomonas paraeruginosa (strain DSM 24068 / PA7) (Pseudomonas aeruginosa (strain PA7)) protein is Large ribosomal subunit protein uL6.